The chain runs to 81 residues: ATP synthase subunit c (81 aa).

The next 2 membrane-spanning stretches (helical) occupy residues 6-26 and 57-77; these read AAASVIAAALAVGLGAIGPGI and LAFMESLTIYGLVIALVLLFA.

This sequence belongs to the ATPase C chain family. As to quaternary structure, F-type ATPases have 2 components, F(1) - the catalytic core - and F(0) - the membrane proton channel. F(1) has five subunits: alpha(3), beta(3), gamma(1), delta(1), epsilon(1). F(0) has four main subunits: a(1), b(1), b'(1) and c(10-14). The alpha and beta chains form an alternating ring which encloses part of the gamma chain. F(1) is attached to F(0) by a central stalk formed by the gamma and epsilon chains, while a peripheral stalk is formed by the delta, b and b' chains.

The protein localises to the cellular thylakoid membrane. In terms of biological role, f(1)F(0) ATP synthase produces ATP from ADP in the presence of a proton or sodium gradient. F-type ATPases consist of two structural domains, F(1) containing the extramembraneous catalytic core and F(0) containing the membrane proton channel, linked together by a central stalk and a peripheral stalk. During catalysis, ATP synthesis in the catalytic domain of F(1) is coupled via a rotary mechanism of the central stalk subunits to proton translocation. Key component of the F(0) channel; it plays a direct role in translocation across the membrane. A homomeric c-ring of between 10-14 subunits forms the central stalk rotor element with the F(1) delta and epsilon subunits. This Synechocystis sp. (strain ATCC 27184 / PCC 6803 / Kazusa) protein is ATP synthase subunit c.